Reading from the N-terminus, the 415-residue chain is Isocitrate dehydrogenase [NADP] (415 aa).

Residues 77 to 79 (TIT) and R84 contribute to the NADP(+) site. T79 is a binding site for substrate. Residues 96–102 (SPNGTIR), R111, and R134 contribute to the substrate site. D254 lines the Mn(2+) pocket. Residue K262 coordinates NADP(+). Mn(2+) is bound at residue D277. NADP(+)-binding positions include 312-317 (GTVTRH) and N330.

It belongs to the isocitrate and isopropylmalate dehydrogenases family. In terms of assembly, heterodimer. Requires Mg(2+) as cofactor. Mn(2+) serves as cofactor.

The protein resides in the cytoplasm. The catalysed reaction is D-threo-isocitrate + NADP(+) = 2-oxoglutarate + CO2 + NADPH. Its function is as follows. May supply 2-oxoglutarate for amino acid biosynthesis and ammonia assimilation via the glutamine synthetase/glutamate synthase (GS/GOGAT) pathway. This Nicotiana tabacum (Common tobacco) protein is Isocitrate dehydrogenase [NADP].